The primary structure comprises 319 residues: Serine acetyltransferase, plasmid (319 aa).

The protein belongs to the transferase hexapeptide repeat family.

It is found in the cytoplasm. It carries out the reaction L-serine + acetyl-CoA = O-acetyl-L-serine + CoA. It participates in amino-acid biosynthesis; L-cysteine biosynthesis; L-cysteine from L-serine: step 1/2. In Synechococcus elongatus (strain ATCC 33912 / PCC 7942 / FACHB-805) (Anacystis nidulans R2), this protein is Serine acetyltransferase, plasmid (srpH).